The chain runs to 545 residues: Glucose-6-phosphate isomerase (545 aa).

The active-site Proton donor is E351. Residues H382 and K510 contribute to the active site.

Belongs to the GPI family.

Its subcellular location is the cytoplasm. The catalysed reaction is alpha-D-glucose 6-phosphate = beta-D-fructose 6-phosphate. Its pathway is carbohydrate biosynthesis; gluconeogenesis. It participates in carbohydrate degradation; glycolysis; D-glyceraldehyde 3-phosphate and glycerone phosphate from D-glucose: step 2/4. Its function is as follows. Catalyzes the reversible isomerization of glucose-6-phosphate to fructose-6-phosphate. This Helicobacter pylori (strain J99 / ATCC 700824) (Campylobacter pylori J99) protein is Glucose-6-phosphate isomerase.